Reading from the N-terminus, the 878-residue chain is MRTHEIRKKFLEFFETKDHYVRKSYSIIPENDPSILLIGAGMAPLKPYFTGEKTPPSPRMATSQKCVRTPDIEEVGITARHATFFEMLGNFSFGDYFKREAIFWGYEFCTEWLSLSPEKLWASVYLDDDEAYDIWHDEVGIPHERIVRLGKEDNFWEIGTGPCGPCSEIHYDRGAEYGCDSPDCKPGCDCDRYLEIWNLVFTQFNRDEEGNYTTLKQKNIDTGAGLERLAVLLQDVPSIYEIDIIKPILDHVIQLSGVNYGEDNDKDISLRIITEHLRSVTFIVGDGVLPANEGRGYVLRRILRRASRHGKLLGIKDTFMSDGVDLVIDIMKEAYPELEERREYIKKIVEIEEDRFNKTVDQGLGILNEFLENMNKQGKNTLEGSDAFKLYDTYGFPLELTREIVQENGYTLDEQGFQEELNRQREQARKAQQESEGMLTESNAMKQFQDQKVEFTGYDNLEQESQIIGIIDHKNDDLLKEVQEGEEVQILINPTPFYGESGGQIGDTGEIFSDNGRAHVKNSSVNGYDQTVLQVKVTDGQLRTGDKVSGKVDYQRRKDIMKNHSATHMLHYALKKVVGAHVEQAGSLVAPDRLRFDFTHFAPLSEDEIKQIELEVNKLIRENSRVRVINTDLEEAKELGAVALFEDKYEQEVRVIEIGPAVELCGGTHATATGELGLFKIDNQTSVGAGVRRLEALTGQHALEYLDQKAEQIQDIAELLKTEENKVVEKTQEFLEDFKAKDKEIEKLKNQIFTFKVDDLLAQSKDISDFKLVANQLNDFDADSLRDLSERVKNKLDSGVVVLGSSTNNKALFVAMVTKDLVEKGVHAGNIVKEVAKITGGGGGGRPDMAQAGGKEPDKLNEAIMKVETLVRNQLSHS.

4 residues coordinate Zn(2+): histidine 564, histidine 568, cysteine 665, and histidine 669.

Belongs to the class-II aminoacyl-tRNA synthetase family. It depends on Zn(2+) as a cofactor.

The protein localises to the cytoplasm. It catalyses the reaction tRNA(Ala) + L-alanine + ATP = L-alanyl-tRNA(Ala) + AMP + diphosphate. Catalyzes the attachment of alanine to tRNA(Ala) in a two-step reaction: alanine is first activated by ATP to form Ala-AMP and then transferred to the acceptor end of tRNA(Ala). Also edits incorrectly charged Ser-tRNA(Ala) and Gly-tRNA(Ala) via its editing domain. In Natranaerobius thermophilus (strain ATCC BAA-1301 / DSM 18059 / JW/NM-WN-LF), this protein is Alanine--tRNA ligase.